The sequence spans 498 residues: Delta(14)-sterol reductase erg24A (498 aa).

4 helical membrane passes run 30 to 50 (LGAFVFIFGLSTLIYCLTFLC), 91 to 111 (VTVWVLSYYVLSLVLYVFLPG), 136 to 156 (ILILGGLALGTYMHGADFVVW), and 163 to 183 (YVQIITANLIICVVLAIFVYA). The N-linked (GlcNAc...) asparagine glycan is linked to N257. Helical transmembrane passes span 275–295 (IVLSTVFQTFYVLDALYMEPA), 302–322 (VIMDGFGYMLSFGHLVWVPFI), and 339–359 (LREILLILAVTGAGYAIFRGA). NADP(+) is bound by residues K363, R367, W395, and 402 to 403 (NY). N429 is a glycosylation site (N-linked (GlcNAc...) asparagine). Residues 444 to 464 (VRGWGMIFTYFFLVYFGALLI) traverse the membrane as a helical segment. NADP(+) is bound by residues D470, 474 to 478 (CKSKY), and Y485.

This sequence belongs to the ERG4/ERG24 family.

The protein localises to the endoplasmic reticulum membrane. Its pathway is steroid metabolism; ergosterol biosynthesis. Its function is as follows. Delta(14)-sterol reductase; part of the third module of ergosterol biosynthesis pathway that includes the late steps of the pathway. Catalyzes the reduction of the C14=C15 double bond within 4,4,24-trimethyl ergosta-8,14,24(28)-trienolto produce 4,4-dimethylfecosterol. The third module or late pathway involves the ergosterol synthesis itself through consecutive reactions that mainly occur in the endoplasmic reticulum (ER) membrane. Firstly, the squalene synthase erg9 catalyzes the condensation of 2 farnesyl pyrophosphate moieties to form squalene, which is the precursor of all steroids. Squalene synthase is crucial for balancing the incorporation of farnesyl diphosphate (FPP) into sterol and nonsterol isoprene synthesis. Secondly, squalene is converted into lanosterol by the consecutive action of the squalene epoxidase erg1 and the lanosterol synthase erg7. Then, the delta(24)-sterol C-methyltransferase erg6 methylates lanosterol at C-24 to produce eburicol. Eburicol is the substrate of the sterol 14-alpha demethylase encoded by cyp51A and cyp51B, to yield 4,4,24-trimethyl ergosta-8,14,24(28)-trienol. The C-14 reductase erg24 then reduces the C14=C15 double bond which leads to 4,4-dimethylfecosterol. A sequence of further demethylations at C-4, involving the C-4 demethylation complex containing the C-4 methylsterol oxidases erg25A or erg25B, the sterol-4-alpha-carboxylate 3-dehydrogenase erg26 and the 3-keto-steroid reductase erg27, leads to the production of fecosterol via 4-methylfecosterol. The C-8 sterol isomerase erg2 then catalyzes the reaction which results in unsaturation at C-7 in the B ring of sterols and thus converts fecosterol to episterol. The sterol-C5-desaturase erg3B then catalyzes the introduction of a C-5 double bond in the B ring to produce 5-dehydroepisterol. The 2 other sterol-C5-desaturases, erg3A and erg3C, seem to be less important in ergosterol biosynthesis. The C-22 sterol desaturase erg5 further converts 5-dehydroepisterol into ergosta-5,7,22,24(28)-tetraen-3beta-ol by forming the C-22(23) double bond in the sterol side chain. Finally, ergosta-5,7,22,24(28)-tetraen-3beta-ol is substrate of the C-24(28) sterol reductases erg4A and erg4B to produce ergosterol. Possible alternative sterol biosynthetic pathways might exist from fecosterol to ergosterol, depending on the activities of the erg3 isoforms. This is Delta(14)-sterol reductase erg24A from Aspergillus fumigatus (strain ATCC MYA-4609 / CBS 101355 / FGSC A1100 / Af293) (Neosartorya fumigata).